The primary structure comprises 378 residues: Zinc transporter 7 (378 aa).

At 1–37 (MLPLSIKDDEYKPPKFNLFGKISGWFRSILSDKTSRN) the chain is on the cytoplasmic side. The helical transmembrane segment at 38-58 (LFFFLCLNLSFAFVELLYGIW) threads the bilayer. Topologically, residues 59–67 (SNCLGLISD) are lumenal. Residues 68–88 (SFHMFFDSTAILAGLAASVIS) traverse the membrane as a helical segment. The Cytoplasmic segment spans residues 89–102 (KWRDNDAFSYGYVR). The helical transmembrane segment at 103-123 (AEVLAGFVNGLFLIFTAFFIF) threads the bilayer. Residues 124 to 140 (SEGVERALAPPDVHHER) lie on the Lumenal side of the membrane. The chain crosses the membrane as a helical span at residues 141 to 161 (LLLVSILGFVVNLVGIFVFNH). The his-rich loop stretch occupies residues 161–220 (HGGHGHSHGSGHGHSHSLFNGALDHSHGHEDHCHSHGAKHGGAHSHDHDHAHGHGHLHSH). Topologically, residues 162 to 238 (GGHGHSHGSG…AGPSRQILQG (77 aa)) are cytoplasmic. Positions 186–228 (SHGHEDHCHSHGAKHGGAHSHDHDHAHGHGHLHSHDGPSFKET) are disordered. Over residues 204–224 (HSHDHDHAHGHGHLHSHDGPS) the composition is skewed to basic and acidic residues. Residues 239–259 (VFLHILADTLGSIGVIASAIM) traverse the membrane as a helical segment. Residues 260–264 (MQNFG) are Lumenal-facing. The helical transmembrane segment at 265 to 285 (LMIADPICSILIAILIVVSVI) threads the bilayer. The Cytoplasmic portion of the chain corresponds to 286-378 (PLLRESIGIL…LYVQIDFAAM (93 aa)).

This sequence belongs to the cation diffusion facilitator (CDF) transporter (TC 2.A.4) family. SLC30A subfamily. Homooligomer.

Its subcellular location is the golgi apparatus membrane. The protein localises to the cytoplasmic vesicle. It is found in the golgi apparatus. The protein resides in the trans-Golgi network. It localises to the sarcoplasmic reticulum. Its subcellular location is the mitochondrion. It catalyses the reaction Zn(2+)(in) = Zn(2+)(out). Functionally, zinc ion transporter mediating zinc entry from the cytosol into the lumen of organelles along the secretory pathway. By contributing to zinc ion homeostasis within the early secretory pathway, regulates the activation and folding of enzymes like alkaline phosphatases. This Rattus norvegicus (Rat) protein is Zinc transporter 7.